The sequence spans 376 residues: MQVKRIIHINVSFTLMLSWDETLFKNPEVFDPDYIPDELLFRDGQIRQLVSCIKPAMLNSSPINAFCLGPPSTGKTSTIRYVLREAERETGLLYSYIRIPRFKEPYKVFSKIFQDVLGQQSPPSGISKTVLMDRVWSNLDEPLLVVLDDINFLGKNYANEILYEILKAPDEYGVKVGIVAAATDVKFPLLLDPFVGASFHYMEIHYPSYGYAEIEGILRKRVEHGFYEGVFDDGAFRRVVELAYRASDVRYGIYLLKAAGMNAESRGSRKVEERDVEVAHAGESLSFIAKILTALNSEERAVLRMIYSQNAISTGDLYEQVCSEIKMSYRKYYNILEKLERLKLIEISFGEKGRGKTRYVQGKYDAEVVDRAMQLI.

Residues 73 to 77 (TGKTS), Tyr-209, and Arg-221 each bind ATP.

This sequence belongs to the CDC6/cdc18 family.

Involved in regulation of DNA replication. The protein is ORC1-type DNA replication protein 2 (cdc6-2) of Archaeoglobus fulgidus (strain ATCC 49558 / DSM 4304 / JCM 9628 / NBRC 100126 / VC-16).